A 932-amino-acid polypeptide reads, in one-letter code: Progesterone receptor (932 aa).

The AF3; mediates transcriptional activation stretch occupies residues 1-164 (MTELKAKGPR…PATQGVLSPL (164 aa)). Positions 1-254 (MTELKAKGPR…GGAAAGGAAA (254 aa)) are disordered. The segment at 1–565 (MTELKAKGPR…YSFESLPQKI (565 aa)) is modulating, Pro-Rich. Ser20 carries the phosphoserine modification. Positions 55-59 (LDGLL) match the LXXL motif 1 motif. Ser81 carries the post-translational modification Phosphoserine. Over residues 88 to 103 (SRAEATRGAGGSSSSP) the composition is skewed to low complexity. An LXXL motif 2 motif is present at residues 115–119 (LDTLL). Residues Ser130 and Ser162 each carry the phosphoserine modification. Positions 165–304 (MSRSGGKAGD…LATTVMDFIH (140 aa)) are mediates transcriptional transrepression. Positions 183-187 (KVLPQ) match the Nuclear localization signal motif. Phosphoserine is present on residues Ser190 and Ser213. A compositionally biased stretch (acidic residues) spans 220–231 (EVEEEDGSESED). A compositionally biased stretch (low complexity) spans 232–254 (SAGPLLKGKPRALGGAAAGGAAA). Ser293 bears the Phosphoserine; by MAPK1 mark. The span at 334-349 (AASAFAPPRSSPSASS) shows a compositional bias: low complexity. The segment at 334-356 (AASAFAPPRSSPSASSTPVAVGD) is disordered. Position 344 is a phosphoserine; by MAPK (Ser344). Lys387 participates in a covalent cross-link: Glycyl lysine isopeptide (Lys-Gly) (interchain with G-Cter in SUMO); alternate. Lys387 is covalently cross-linked (Glycyl lysine isopeptide (Lys-Gly) (interchain with G-Cter in ubiquitin); alternate). Disordered regions lie at residues 414–451 (PDFP…SSAS) and 468–499 (PPQQ…STAA). The span at 417–432 (PLGPPPPLPPRAPPSR) shows a compositional bias: pro residues. The segment covering 433-451 (PGEAAVTAAPASASVSSAS) has biased composition (low complexity). The interval 455–545 (STLECILYKA…VYPPYLNYLR (91 aa)) is AF1; mediates transcriptional activation. Over residues 470 to 480 (QQGPFAPPPSK) the composition is skewed to pro residues. Lys530 participates in a covalent cross-link: Glycyl lysine isopeptide (Lys-Gly) (interchain with G-Cter in SUMO). 2 consecutive NR C4-type zinc fingers follow at residues 566–586 (CLIC…CGSC) and 602–626 (CAGR…LRKC). The segment at residues 566–638 (CLICGDEASG…AGMVLGGRKF (73 aa)) is a DNA-binding region (nuclear receptor). Ser675 bears the Phosphoserine mark. Residues 678 to 912 (QDIQLIPPLI…EFPEMMSEVI (235 aa)) form the NR LBD domain. The interval 686–932 (LINLLMSIEP…MVKPLLFHKK (247 aa)) is AF2; mediates transcriptional activation. Arg765 serves as a coordination point for progesterone.

It belongs to the nuclear hormone receptor family. As to quaternary structure, interacts with SMARD1 and UNC45A. Interacts with CUEDC2; the interaction promotes ubiquitination, decreases sumoylation, and represses transcriptional activity. Interacts with PIAS3; the interaction promotes sumoylation of PR in a hormone-dependent manner, inhibits DNA-binding, and alters nuclear export. Interacts with SP1; the interaction requires ligand-induced phosphorylation on Ser-344 by ERK1/2-MAPK. Interacts with PRMT2. Interacts with NCOA2 and NCOA1. Interacts with KLF9. Interacts with GTF2B. Phosphorylated on multiple serine sites. Several of these sites are hormone-dependent. Phosphorylation on Ser-293 is highly hormone-dependent and modulates ubiquitination and sumoylation on Lys-387. Phosphorylation on Ser-102 and Ser-344 also requires induction by hormone. Basal phosphorylation on Ser-81, Ser-162 and Ser-190 is increased in response to progesterone and can be phosphorylated in vitro by the CDK2-A1 complex. Phosphorylation at Ser-162 and Ser-293, but not at Ser-190, is impaired during the G(2)/M phase of the cell cycle. Phosphorylation on Ser-344 by ERK1/2 MAPK is required for interaction with SP1. Post-translationally, sumoylation is hormone-dependent and represses transcriptional activity. Sumoylation on all three sites is enhanced by PIAS3. Desumoylated by SENP1. Sumoylation on Lys-387, the main site of sumoylation, is repressed by ubiquitination on the same site, and modulated by phosphorylation at Ser-293. In terms of processing, ubiquitination is hormone-dependent and represses sumoylation on the same site. Promoted by MAPK-mediated phosphorylation on Ser-293. Ubiquitinated by UBR5, leading to its degradation: UBR5 specifically recognizes and binds ligand-bound PGR when it is not associated with coactivators (NCOAs). In presence of NCOAs, the UBR5-degron is not accessible, preventing its ubiquitination and degradation. Palmitoylated by ZDHHC7 and ZDHHC21. Palmitoylation is required for plasma membrane targeting and for rapid intracellular signaling via ERK and AKT kinases and cAMP generation.

It localises to the nucleus. It is found in the cytoplasm. In terms of biological role, the steroid hormones and their receptors are involved in the regulation of eukaryotic gene expression and affect cellular proliferation and differentiation in target tissues. Transcriptional activator of several progesteron-dependent promoters in a variety of cell types. Involved in activation of SRC-dependent MAPK signaling on hormone stimulation. The sequence is that of Progesterone receptor (PGR) from Hylobates lar (Lar gibbon).